Consider the following 497-residue polypeptide: FAD-linked oxidoreductase fogF (497 aa).

The signal sequence occupies residues 1–18 (MRRNILTALACSWLTAHA). Residues 59–229 (NAPTYAGAIS…TSATYKLHKL (171 aa)) enclose the FAD-binding PCMH-type domain.

The protein belongs to the oxygen-dependent FAD-linked oxidoreductase family. The cofactor is FAD.

It participates in secondary metabolite biosynthesis. In terms of biological role, FAD-linked oxidoreductase; part of the gene cluster that mediates the biosynthesis of flavoglaucin and congeners (including aspergin, dihydroauroglaucin and auroglaucin), prenylated salicylaldehyde derivatives carrying a saturated or an unsaturated C-7 side chain. The PKS fogA releases the carboxylic acid (8E,10E,12E)-3,5,7-trihydroxytetradeca-8,10,12-trienoic acid as its product, as well as derivatives with one and two double bonds. FogA is indeed able to reduce the initial triketide, thus being at least partially responsible for the differently saturated heptyl side chains of flavoglaucin congeners. The oxidoreductases fogB, fogC and fogD modify the nascent polyketide in fogA-bound form and, together, fogA, fogB, fogC and fogD are necessary for the formation of the aromatic core and the cyclized PKS products are released as salicyl alcohols. In particular, fogB is responsible for oxidation of a hydroxyl group or reduction of remaining double bond(s) at the C-7 residue whereas fogD is probably involved in the reductive release of the modified PKS products. The cytochrome P450 monooxygenase fogE is then responsible for the hydroxylation at C-3 of the benzene ring. The fogE products are substrates of the prenyltransferase fogH and the prenylated benzyl alcohols are subsequently oxidized by the fogF to produce the final aryl aldehydes flavoglaucin and congeners. The short-chain dehydrogenase fogG does not seem to be involved in the biosynthesis of the prenylated salicylaldehyde derivatives. The chain is FAD-linked oxidoreductase fogF from Aspergillus ruber (strain CBS 135680).